We begin with the raw amino-acid sequence, 534 residues long: Anther-specific proline-rich protein APG (534 aa).

An N-terminal signal peptide occupies residues 1 to 35 (MKRSSLVDSCSYSRIFRSIFCLLSFCIFFLTTTNA). Pro residues predominate over residues 59-196 (NPPTPDPSPK…SPKPAPSPPK (138 aa)). Positions 59–202 (NPPTPDPSPK…SPPKPENKTI (144 aa)) are disordered. Ser-211 functions as the Nucleophile in the catalytic mechanism. Catalysis depends on residues Asp-508 and His-511.

Belongs to the 'GDSL' lipolytic enzyme family. As to expression, found in sporophytic and gametophytic cell types in the anther, only in male fertile plants.

The chain is Anther-specific proline-rich protein APG (APG) from Arabidopsis thaliana (Mouse-ear cress).